A 72-amino-acid chain; its full sequence is Translation initiation factor IF-1 (72 aa).

The S1-like domain occupies 1–72 (MSKEEVLEFS…TKGRITYRYK (72 aa)).

It belongs to the IF-1 family. As to quaternary structure, component of the 30S ribosomal translation pre-initiation complex which assembles on the 30S ribosome in the order IF-2 and IF-3, IF-1 and N-formylmethionyl-tRNA(fMet); mRNA recruitment can occur at any time during PIC assembly.

The protein localises to the cytoplasm. Functionally, one of the essential components for the initiation of protein synthesis. Stabilizes the binding of IF-2 and IF-3 on the 30S subunit to which N-formylmethionyl-tRNA(fMet) subsequently binds. Helps modulate mRNA selection, yielding the 30S pre-initiation complex (PIC). Upon addition of the 50S ribosomal subunit IF-1, IF-2 and IF-3 are released leaving the mature 70S translation initiation complex. In Bartonella bacilliformis (strain ATCC 35685 / KC583 / Herrer 020/F12,63), this protein is Translation initiation factor IF-1.